Reading from the N-terminus, the 199-residue chain is MTDQIRMAQASAGMNLSDSVYERLLRERIIFLGTQVDDEIANKLCAQILLLSAEDPTRDISLYINSPGGSVTAGMAIYDTMKYSPCDIATYGMGLAASMGQFLLSGGTKGKRFALPHARIMMHQPSAGVGGTAADIAIQAEQFAQTKREMAELIAEHTGQSFEQITKDSDRDRWFTAQQAKEYGIVDHVIESAQGPLSN.

The active-site Nucleophile is the Ser-98. His-123 is an active-site residue.

The protein belongs to the peptidase S14 family. Fourteen ClpP subunits assemble into 2 heptameric rings which stack back to back to give a disk-like structure with a central cavity, resembling the structure of eukaryotic proteasomes.

It is found in the cytoplasm. The catalysed reaction is Hydrolysis of proteins to small peptides in the presence of ATP and magnesium. alpha-casein is the usual test substrate. In the absence of ATP, only oligopeptides shorter than five residues are hydrolyzed (such as succinyl-Leu-Tyr-|-NHMec, and Leu-Tyr-Leu-|-Tyr-Trp, in which cleavage of the -Tyr-|-Leu- and -Tyr-|-Trp bonds also occurs).. Functionally, cleaves peptides in various proteins in a process that requires ATP hydrolysis. Has a chymotrypsin-like activity. Plays a major role in the degradation of misfolded proteins. The protein is ATP-dependent Clp protease proteolytic subunit 2 of Corynebacterium diphtheriae (strain ATCC 700971 / NCTC 13129 / Biotype gravis).